A 315-amino-acid polypeptide reads, in one-letter code: Aspartate carbamoyltransferase catalytic subunit (315 aa).

Residues R65 and T66 each coordinate carbamoyl phosphate. K93 provides a ligand contact to L-aspartate. The carbamoyl phosphate site is built by R115, H145, and Q148. 2 residues coordinate L-aspartate: R179 and R234. Carbamoyl phosphate is bound by residues G275 and P276.

The protein belongs to the aspartate/ornithine carbamoyltransferase superfamily. ATCase family. As to quaternary structure, heterododecamer (2C3:3R2) of six catalytic PyrB chains organized as two trimers (C3), and six regulatory PyrI chains organized as three dimers (R2).

The catalysed reaction is carbamoyl phosphate + L-aspartate = N-carbamoyl-L-aspartate + phosphate + H(+). It functions in the pathway pyrimidine metabolism; UMP biosynthesis via de novo pathway; (S)-dihydroorotate from bicarbonate: step 2/3. Functionally, catalyzes the condensation of carbamoyl phosphate and aspartate to form carbamoyl aspartate and inorganic phosphate, the committed step in the de novo pyrimidine nucleotide biosynthesis pathway. The polypeptide is Aspartate carbamoyltransferase catalytic subunit (Xanthomonas axonopodis pv. citri (strain 306)).